Consider the following 638-residue polypeptide: MRRFSTIVDLLISKKPSSQANSRIDLICKRFHISRVLNNDFVESTERKNGVGLVCPEKHEDEFAGEVEKIYRILRNHHSRVPKLELALNESGIDLRPGLIIRVLSRCGDAGNLGYRFFLWATKQPGYFHSYEVCKSMVMILSKMRQFGAVWGLIEEMRKTNPELIEPELFVVLMRRFASANMVKKAVEVLDEMPKYGLEPDEYVFGCLLDALCKNGSVKEASKVFEDMREKFPPNLRYFTSLLYGWCREGKLMEAKEVLVQMKEAGLEPDIVVFTNLLSGYAHAGKMADAYDLMNDMRKRGFEPNVNCYTVLIQALCRTEKRMDEAMRVFVEMERYGCEADIVTYTALISGFCKWGMIDKGYSVLDDMRKKGVMPSQVTYMQIMVAHEKKEQFEECLELIEKMKRRGCHPDLLIYNVVIRLACKLGEVKEAVRLWNEMEANGLSPGVDTFVIMINGFTSQGFLIEACNHFKEMVSRGIFSAPQYGTLKSLLNNLVRDDKLEMAKDVWSCISNKTSSCELNVSAWTIWIHALYAKGHVKEACSYCLDMMEMDLMPQPNTYAKLMKGLNKLYNRTIAAEITEKVVKMASEREMSFKMYKKKGEEDLIEKAKPKGNKEGKKKGTDHQRYKGRGERSRAKAL.

PPR repeat units lie at residues 130–164, 166–200, 201–231, 235–269, 270–304, 305–340, 341–375, 376–410, 411–445, 446–480, 483–513, and 520–554; these read SYEV…NPEL, EPEL…GLEP, DEYV…MREK, NLRY…GLEP, DIVV…GFEP, NVNC…GCEA, DIVT…GVMP, SQVT…GCHP, DLLI…GLSP, GVDT…GIFS, QYGT…ISNK, and NVSA…DLMP. The interval 604–638 is disordered; sequence LIEKAKPKGNKEGKKKGTDHQRYKGRGERSRAKAL.

The protein belongs to the PPR family. P subfamily.

The chain is Pentatricopeptide repeat-containing protein At3g49730 from Arabidopsis thaliana (Mouse-ear cress).